Reading from the N-terminus, the 262-residue chain is Acyl-[acyl-carrier-protein]--UDP-N-acetylglucosamine O-acyltransferase (262 aa).

This sequence belongs to the transferase hexapeptide repeat family. LpxA subfamily. As to quaternary structure, homotrimer.

The protein resides in the cytoplasm. It catalyses the reaction a (3R)-hydroxyacyl-[ACP] + UDP-N-acetyl-alpha-D-glucosamine = a UDP-3-O-[(3R)-3-hydroxyacyl]-N-acetyl-alpha-D-glucosamine + holo-[ACP]. It functions in the pathway glycolipid biosynthesis; lipid IV(A) biosynthesis; lipid IV(A) from (3R)-3-hydroxytetradecanoyl-[acyl-carrier-protein] and UDP-N-acetyl-alpha-D-glucosamine: step 1/6. Functionally, involved in the biosynthesis of lipid A, a phosphorylated glycolipid that anchors the lipopolysaccharide to the outer membrane of the cell. In Burkholderia ambifaria (strain MC40-6), this protein is Acyl-[acyl-carrier-protein]--UDP-N-acetylglucosamine O-acyltransferase.